A 102-amino-acid chain; its full sequence is Small ribosomal subunit protein uS10 (102 aa).

The protein belongs to the universal ribosomal protein uS10 family. In terms of assembly, part of the 30S ribosomal subunit.

Its function is as follows. Involved in the binding of tRNA to the ribosomes. This is Small ribosomal subunit protein uS10 from Gluconobacter oxydans (strain 621H) (Gluconobacter suboxydans).